The chain runs to 110 residues: Protein YcgL (110 aa).

The 85-residue stretch at 14 to 98 folds into the YcgL domain; the sequence is MFCVIYRSSK…PPEDLLKQHL (85 aa). The interval 87 to 110 is disordered; it reads PPPPEDLLKQHLSSVGQNTSSADR. Over residues 97–110 the composition is skewed to polar residues; it reads HLSSVGQNTSSADR.

The chain is Protein YcgL from Salmonella newport (strain SL254).